A 335-amino-acid chain; its full sequence is Glyceraldehyde-3-phosphate dehydrogenase, cytosolic (335 aa).

NAD(+) is bound by residues 13–14 (RI), D35, and R80. Residues 151–153 (SCT), T182, 211–212 (TG), and R234 contribute to the D-glyceraldehyde 3-phosphate site. Residue C152 is the Nucleophile of the active site. N316 is an NAD(+) binding site.

Belongs to the glyceraldehyde-3-phosphate dehydrogenase family. As to quaternary structure, homotetramer.

The protein resides in the cytoplasm. The catalysed reaction is D-glyceraldehyde 3-phosphate + phosphate + NAD(+) = (2R)-3-phospho-glyceroyl phosphate + NADH + H(+). It participates in carbohydrate degradation; glycolysis; pyruvate from D-glyceraldehyde 3-phosphate: step 1/5. This is Glyceraldehyde-3-phosphate dehydrogenase, cytosolic (GAPC) from Chondrus crispus (Carrageen Irish moss).